A 252-amino-acid chain; its full sequence is 5'-methylthioadenosine/S-adenosylhomocysteine nucleosidase (252 aa).

E20 (proton acceptor) is an active-site residue. Substrate is bound by residues G86, I160, and M181 to E182. The active-site Proton donor is D205.

This sequence belongs to the PNP/UDP phosphorylase family. MtnN subfamily. In terms of assembly, homodimer.

It carries out the reaction S-adenosyl-L-homocysteine + H2O = S-(5-deoxy-D-ribos-5-yl)-L-homocysteine + adenine. The enzyme catalyses S-methyl-5'-thioadenosine + H2O = 5-(methylsulfanyl)-D-ribose + adenine. The catalysed reaction is 5'-deoxyadenosine + H2O = 5-deoxy-D-ribose + adenine. It functions in the pathway amino-acid biosynthesis; L-methionine biosynthesis via salvage pathway; S-methyl-5-thio-alpha-D-ribose 1-phosphate from S-methyl-5'-thioadenosine (hydrolase route): step 1/2. Its function is as follows. Catalyzes the irreversible cleavage of the glycosidic bond in both 5'-methylthioadenosine (MTA) and S-adenosylhomocysteine (SAH/AdoHcy) to adenine and the corresponding thioribose, 5'-methylthioribose and S-ribosylhomocysteine, respectively. Also cleaves 5'-deoxyadenosine, a toxic by-product of radical S-adenosylmethionine (SAM) enzymes, into 5-deoxyribose and adenine. Thus, is required for in vivo function of the radical SAM enzymes biotin synthase and lipoic acid synthase, that are inhibited by 5'-deoxyadenosine accumulation. The sequence is that of 5'-methylthioadenosine/S-adenosylhomocysteine nucleosidase from Buchnera aphidicola subsp. Baizongia pistaciae (strain Bp).